We begin with the raw amino-acid sequence, 151 residues long: Deoxyuridine 5'-triphosphate nucleotidohydrolase (151 aa).

Substrate contacts are provided by residues 70 to 72, N83, 87 to 89, and M97; these read RSG and LID.

The protein belongs to the dUTPase family. Mg(2+) serves as cofactor.

It catalyses the reaction dUTP + H2O = dUMP + diphosphate + H(+). It functions in the pathway pyrimidine metabolism; dUMP biosynthesis; dUMP from dCTP (dUTP route): step 2/2. This enzyme is involved in nucleotide metabolism: it produces dUMP, the immediate precursor of thymidine nucleotides and it decreases the intracellular concentration of dUTP so that uracil cannot be incorporated into DNA. The sequence is that of Deoxyuridine 5'-triphosphate nucleotidohydrolase from Salmonella enteritidis PT4 (strain P125109).